A 271-amino-acid chain; its full sequence is Aspartate/glutamate leucyltransferase (271 aa).

This sequence belongs to the R-transferase family. Bpt subfamily.

The protein localises to the cytoplasm. It catalyses the reaction N-terminal L-glutamyl-[protein] + L-leucyl-tRNA(Leu) = N-terminal L-leucyl-L-glutamyl-[protein] + tRNA(Leu) + H(+). The catalysed reaction is N-terminal L-aspartyl-[protein] + L-leucyl-tRNA(Leu) = N-terminal L-leucyl-L-aspartyl-[protein] + tRNA(Leu) + H(+). In terms of biological role, functions in the N-end rule pathway of protein degradation where it conjugates Leu from its aminoacyl-tRNA to the N-termini of proteins containing an N-terminal aspartate or glutamate. This is Aspartate/glutamate leucyltransferase from Acinetobacter baylyi (strain ATCC 33305 / BD413 / ADP1).